The primary structure comprises 126 residues: Aspartate 1-decarboxylase (126 aa).

S25 serves as the catalytic Schiff-base intermediate with substrate; via pyruvic acid. S25 bears the Pyruvic acid (Ser) mark. T57 lines the substrate pocket. Y58 functions as the Proton donor in the catalytic mechanism. 73 to 75 (GAA) lines the substrate pocket.

This sequence belongs to the PanD family. As to quaternary structure, heterooctamer of four alpha and four beta subunits. Pyruvate serves as cofactor. In terms of processing, is synthesized initially as an inactive proenzyme, which is activated by self-cleavage at a specific serine bond to produce a beta-subunit with a hydroxyl group at its C-terminus and an alpha-subunit with a pyruvoyl group at its N-terminus.

Its subcellular location is the cytoplasm. The enzyme catalyses L-aspartate + H(+) = beta-alanine + CO2. The protein operates within cofactor biosynthesis; (R)-pantothenate biosynthesis; beta-alanine from L-aspartate: step 1/1. Functionally, catalyzes the pyruvoyl-dependent decarboxylation of aspartate to produce beta-alanine. This Stutzerimonas stutzeri (strain A1501) (Pseudomonas stutzeri) protein is Aspartate 1-decarboxylase.